Reading from the N-terminus, the 432-residue chain is Nuclear pore complex-interacting protein family member B8 (432 aa).

Disordered regions lie at residues arginine 260–serine 280 and serine 353–arginine 420. The span at glutamine 270 to serine 280 shows a compositional bias: polar residues. Over residues glutamate 374–glutamate 402 the composition is skewed to basic and acidic residues. The segment covering lysine 408–arginine 420 has biased composition (basic residues).

The protein belongs to the NPIP family.

The sequence is that of Nuclear pore complex-interacting protein family member B8 (NPIPB8) from Homo sapiens (Human).